A 344-amino-acid chain; its full sequence is Putative [LysW]-lysine/[LysW]-ornithine hydrolase (344 aa).

Residue His66 participates in Zn(2+) binding. Asp68 is a catalytic residue. Residue Asp90 participates in Zn(2+) binding. The active-site Proton acceptor is Glu117. Residues Glu118, Glu139, and His297 each contribute to the Zn(2+) site.

The protein belongs to the peptidase M20A family. LysK subfamily. It depends on Zn(2+) as a cofactor. Co(2+) is required as a cofactor.

The protein localises to the cytoplasm. The catalysed reaction is [amino-group carrier protein]-C-terminal-gamma-(L-lysyl)-L-glutamate + H2O = [amino-group carrier protein]-C-terminal-L-glutamate + L-lysine. The enzyme catalyses [amino-group carrier protein]-C-terminal-gamma-(L-ornithyl)-L-glutamate + H2O = [amino-group carrier protein]-C-terminal-L-glutamate + L-ornithine. Its pathway is amino-acid biosynthesis; L-lysine biosynthesis via AAA pathway; L-lysine from L-alpha-aminoadipate (Thermus route): step 5/5. It functions in the pathway amino-acid biosynthesis; L-arginine biosynthesis. In terms of biological role, catalyzes the release of L-lysine from [LysW]-gamma-L-lysine and the release of L-ornithine from [LysW]-L-ornithine. The protein is Putative [LysW]-lysine/[LysW]-ornithine hydrolase of Thermococcus kodakarensis (strain ATCC BAA-918 / JCM 12380 / KOD1) (Pyrococcus kodakaraensis (strain KOD1)).